The sequence spans 346 residues: Porin Omp2a (346 aa).

The first 22 residues, 1–22, serve as a signal peptide directing secretion; the sequence is MNIKSLLLGSAAALVAASGAQA.

Belongs to the alphaproteobacteria porin family. As to quaternary structure, monomer.

Its subcellular location is the cell outer membrane. Forms passive diffusion pores that allow small molecular weight hydrophilic materials across the outer membrane. This Brucella ovis protein is Porin Omp2a (omp2a).